The sequence spans 146 residues: Anti-sigma F factor (146 aa).

The protein belongs to the anti-sigma-factor family.

It carries out the reaction L-seryl-[protein] + ATP = O-phospho-L-seryl-[protein] + ADP + H(+). The catalysed reaction is L-threonyl-[protein] + ATP = O-phospho-L-threonyl-[protein] + ADP + H(+). Binds to sigma F and blocks its ability to form an RNA polymerase holoenzyme (E-sigma F). Phosphorylates SpoIIAA on a serine residue. This phosphorylation may enable SpoIIAA to act as an anti-anti-sigma factor that counteracts SpoIIAB and thus releases sigma F from inhibition. In Halalkalibacterium halodurans (strain ATCC BAA-125 / DSM 18197 / FERM 7344 / JCM 9153 / C-125) (Bacillus halodurans), this protein is Anti-sigma F factor.